Here is a 704-residue protein sequence, read N- to C-terminus: Matrix metalloproteinase-9 (704 aa).

Positions 1–19 (MSPRQPLVLVFLVLGCCSA) are cleaved as a signal peptide. The propeptide at 20–106 (APRPHKPTVV…PRCGVPDLGK (87 aa)) is activation peptide. The N-linked (GlcNAc...) asparagine glycan is linked to asparagine 38. The Cysteine switch signature appears at 97 to 104 (PRCGVPDL). Zn(2+) is bound at residue cysteine 99. Asparagine 127 carries N-linked (GlcNAc...) asparagine glycosylation. 2 residues coordinate Ca(2+): aspartate 131 and aspartate 165. Residues histidine 175 and aspartate 177 each contribute to the Zn(2+) site. Positions 182, 183, 185, and 187 each coordinate Ca(2+). Residue histidine 190 participates in Zn(2+) binding. Positions 197, 199, and 201 each coordinate Ca(2+). Zn(2+) is bound at residue histidine 203. Ca(2+)-binding residues include aspartate 205, aspartate 206, and glutamate 208. 3 consecutive Fibronectin type-II domains span residues 225–273 (ADGA…FCPS), 283–331 (GDGK…FCPT), and 342–390 (SAGE…FCPD). Intrachain disulfides connect cysteine 230-cysteine 256, cysteine 244-cysteine 271, cysteine 288-cysteine 314, cysteine 302-cysteine 329, cysteine 347-cysteine 373, and cysteine 361-cysteine 388. Histidine 401 is a binding site for Zn(2+). Glutamate 402 is an active-site residue. Zn(2+) contacts are provided by histidine 405 and histidine 411. Residues 434–507 (DDVRGIQHLY…PSEAPTVPVD (74 aa)) are disordered. Pro residues-rich tracts occupy residues 450–461 (EPQPPTAPPTAP) and 483–496 (TGPP…PPTA). Cysteines 513 and 701 form a disulfide. 4 Hemopexin repeats span residues 515-560 (VNIF…WPAL), 561-605 (PRKL…GLGP), 607-654 (VTQV…YPGV), and 655-701 (PLNT…ILQC).

The protein belongs to the peptidase M10A family. In terms of assembly, exists as monomer or homodimer; disulfide-linked. Also exists as heterodimer with LCN2. Macrophages and transformed cell lines produce only the monomeric form. Interacts with ECM1. The cofactor is Zn(2+). Ca(2+) is required as a cofactor. Post-translationally, N- and O-glycosylated.

The protein localises to the secreted. Its subcellular location is the extracellular space. The protein resides in the extracellular matrix. It carries out the reaction Cleavage of gelatin types I and V and collagen types IV and V.. Functionally, matrix metalloproteinase that plays an essential role in local proteolysis of the extracellular matrix and in leukocyte migration. Could play a role in bone osteoclastic resorption. Cleaves KiSS1 at a Gly-|-Leu bond. Cleaves NINJ1 to generate the Secreted ninjurin-1 form. Cleaves type IV and type V collagen into large C-terminal three quarter fragments and shorter N-terminal one quarter fragments. Degrades fibronectin but not laminin or Pz-peptide. This is Matrix metalloproteinase-9 (MMP9) from Canis lupus familiaris (Dog).